The primary structure comprises 287 residues: rRNA adenine N-6-methyltransferase (287 aa).

Residues 1-13 (MKKKNHKYRGKKL) are compositionally biased toward basic residues. Positions 1 to 21 (MKKKNHKYRGKKLNRGESPNF) are disordered. Residues histidine 25, methionine 27, glycine 52, glutamate 73, aspartate 98, and asparagine 114 each coordinate S-adenosyl-L-methionine.

The protein belongs to the class I-like SAM-binding methyltransferase superfamily. rRNA adenine N(6)-methyltransferase family.

Functionally, involved in erythromycin resistance. This is rRNA adenine N-6-methyltransferase (ermD) from Bacillus licheniformis.